The chain runs to 368 residues: tRNA 2-selenouridine synthase (368 aa).

The 125-residue stretch at 12-136 folds into the Rhodanese domain; sequence FLGDAPLLDT…MRGFLLETIE (125 aa). Cys95 acts as the S-selanylcysteine intermediate in catalysis.

This sequence belongs to the SelU family. Monomer.

The enzyme catalyses 5-methylaminomethyl-2-thiouridine(34) in tRNA + selenophosphate + (2E)-geranyl diphosphate + H2O + H(+) = 5-methylaminomethyl-2-selenouridine(34) in tRNA + (2E)-thiogeraniol + phosphate + diphosphate. It catalyses the reaction 5-methylaminomethyl-2-thiouridine(34) in tRNA + (2E)-geranyl diphosphate = 5-methylaminomethyl-S-(2E)-geranyl-thiouridine(34) in tRNA + diphosphate. The catalysed reaction is 5-methylaminomethyl-S-(2E)-geranyl-thiouridine(34) in tRNA + selenophosphate + H(+) = 5-methylaminomethyl-2-(Se-phospho)selenouridine(34) in tRNA + (2E)-thiogeraniol. It carries out the reaction 5-methylaminomethyl-2-(Se-phospho)selenouridine(34) in tRNA + H2O = 5-methylaminomethyl-2-selenouridine(34) in tRNA + phosphate. Its function is as follows. Involved in the post-transcriptional modification of the uridine at the wobble position (U34) of tRNA(Lys), tRNA(Glu) and tRNA(Gln). Catalyzes the conversion of 2-thiouridine (S2U-RNA) to 2-selenouridine (Se2U-RNA). Acts in a two-step process involving geranylation of 2-thiouridine (S2U) to S-geranyl-2-thiouridine (geS2U) and subsequent selenation of the latter derivative to 2-selenouridine (Se2U) in the tRNA chain. In Bordetella bronchiseptica (strain ATCC BAA-588 / NCTC 13252 / RB50) (Alcaligenes bronchisepticus), this protein is tRNA 2-selenouridine synthase.